We begin with the raw amino-acid sequence, 145 residues long: UPF0102 protein BAV3162 (145 aa).

The protein belongs to the UPF0102 family.

The polypeptide is UPF0102 protein BAV3162 (Bordetella avium (strain 197N)).